Reading from the N-terminus, the 171-residue chain is Alpha-amylase/trypsin inhibitor CMd (171 aa).

An N-terminal signal peptide occupies residues 1–24; it reads MACKSSRSLLLLATVMVSVFAAAA.

This sequence belongs to the protease inhibitor I6 (cereal trypsin/alpha-amylase inhibitor) family. As to quaternary structure, heterotetramer of one CMa, one CMb and two CMd chains. Five disulfide bonds, which are essential for the inhibitor activity, are probably present. Endosperm.

The protein resides in the secreted. Part of a complex with inhibitory activity, but CMd is inactive as a separate subunit. This Hordeum vulgare (Barley) protein is Alpha-amylase/trypsin inhibitor CMd (IAT3).